The primary structure comprises 384 residues: Substance-K receptor (384 aa).

Over 1 to 32 (MGGRAIVTDTNIFSGLESNTTGVTAFSMPAWQ) the chain is Extracellular. An N-linked (GlcNAc...) asparagine glycan is attached at Asn19. The chain crosses the membrane as a helical span at residues 33 to 56 (LALWATAYLGLVLVAVTGNATVIW). At 57 to 69 (IILAHERMRTVTN) the chain is on the cytoplasmic side. The chain crosses the membrane as a helical span at residues 70–90 (YFIINLALADLCMAAFNATFN). Residues 91 to 107 (FVYASHNIWYFGRAFCY) lie on the Extracellular side of the membrane. An intrachain disulfide couples Cys106 to Cys181. Residues 108 to 129 (FQNLFPITAMFVSIYSMTAIAA) traverse the membrane as a helical segment. At 130 to 149 (DRYMAIVHPFQPRLSAPITK) the chain is on the cytoplasmic side. Residues 150–170 (ATIAGIWLVALALASPQCFYS) traverse the membrane as a helical segment. Over 171 to 196 (TITVDQGATKCVVAWPNDNGGKMLLL) the chain is Extracellular. The chain crosses the membrane as a helical span at residues 197 to 218 (YHLVVFVLVYFLPLVVMFVAYS). At 219 to 251 (VIGLTLWKRAVPRHQAHGANLRHLHAKKKFVKA) the chain is on the cytoplasmic side. The chain crosses the membrane as a helical span at residues 252-272 (MVLVVLTFAICWLPYHLYFIL). Over 273 to 290 (GSFQKDIYYRKFIQQVYL) the chain is Extracellular. A helical transmembrane segment spans residues 291-310 (ALFWLAMSSTMYNPIIYCCL). The Cytoplasmic segment spans residues 311–384 (NHRFRSGFRL…SPQDVEPAAP (74 aa)). Cys324 carries the S-palmitoyl cysteine lipid modification.

It belongs to the G-protein coupled receptor 1 family.

It is found in the cell membrane. Functionally, this is a receptor for the tachykinin neuropeptide substance K (neurokinin A). It is associated with G proteins that activate a phosphatidylinositol-calcium second messenger system. The rank order of affinity of this receptor to tachykinins is: substance K &gt; neuromedin-K &gt; substance P. The polypeptide is Substance-K receptor (TACR2) (Mesocricetus auratus (Golden hamster)).